A 341-amino-acid chain; its full sequence is MERAVPLAVPLGQTEVFQALQRLHMTIFSQSVSPCGKFLAAGNNYGQIAIFSLSSALSSEAKEESKKPVVTFQAHDGPVYSMVSTDRHLLSAGDGEVKAWLWAEMLKKGCKELWRRQPPYRTSLEVPEINALLLVPKENSLILAGGDCQLHTMDLETGTFTRVLRGHTDYIHCLALRERSPEVLSGGEDGAVRLWDLRTAKEVQTIEVYKHEECSRPHNGRWIGCLATDSDWMVCGGGPALTLWHLRSSTPTTIFPIRAPQKHVTFYQDLILSAGQGRCVNQWQLSGELKAQVPGSSPGLLSLSLNQQPAAPECKVLTAAGNSCRVDVFTNLGYRAFSLSF.

WD repeat units lie at residues 22–61, 74–112, 124–165, 166–205, 215–254, 256–293, and 295–339; these read RLHM…SSEA, AHDG…GCKE, LEVP…RVLR, GHTD…EVQT, SRPH…PTTI, PIRA…KAQV, and GSSP…AFSL. Ser180 is subject to Phosphoserine.

The protein belongs to the WD repeat THOC6 family. In terms of assembly, component of the THO subcomplex, which is composed of THOC1, THOC2, THOC3, THOC5, THOC6 and THOC7. The THO subcomplex interacts with DDX39B to form the THO-DDX39B complex which multimerizes into a 28-subunit tetrameric assembly. Component of the transcription/export (TREX) complex at least composed of ALYREF/THOC4, DDX39B, SARNP/CIP29, CHTOP and the THO subcomplex; in the complex interacts with THOC5; together with THOC5 and THOC7, plays a key structural role in the oligomerization of the THO-DDX39B complex. TREX seems to have a dynamic structure involving ATP-dependent remodeling.

It localises to the nucleus. It is found in the nucleus speckle. In terms of biological role, component of the THO subcomplex of the TREX complex which is thought to couple mRNA transcription, processing and nuclear export, and which specifically associates with spliced mRNA and not with unspliced pre-mRNA. Plays a key structural role in the oligomerization of the THO-DDX39B complex. TREX is recruited to spliced mRNAs by a transcription-independent mechanism, binds to mRNA upstream of the exon-junction complex (EJC) and is recruited in a splicing- and cap-dependent manner to a region near the 5' end of the mRNA where it functions in mRNA export to the cytoplasm via the TAP/NXF1 pathway. Plays a role in apoptosis negative control involved in brain development. Functionally, (Microbial infection) The TREX complex is essential for the export of Kaposi's sarcoma-associated herpesvirus (KSHV) intronless mRNAs and infectious virus production. The polypeptide is THO complex subunit 6 (THOC6) (Homo sapiens (Human)).